The chain runs to 132 residues: Small ribosomal subunit protein uS8 (132 aa).

Belongs to the universal ribosomal protein uS8 family. In terms of assembly, part of the 30S ribosomal subunit. Contacts proteins S5 and S12.

Its function is as follows. One of the primary rRNA binding proteins, it binds directly to 16S rRNA central domain where it helps coordinate assembly of the platform of the 30S subunit. This Corynebacterium jeikeium (strain K411) protein is Small ribosomal subunit protein uS8.